The following is a 79-amino-acid chain: Small ribosomal subunit protein bS18 (79 aa).

It belongs to the bacterial ribosomal protein bS18 family. Part of the 30S ribosomal subunit. Forms a tight heterodimer with protein bS6.

Its function is as follows. Binds as a heterodimer with protein bS6 to the central domain of the 16S rRNA, where it helps stabilize the platform of the 30S subunit. This chain is Small ribosomal subunit protein bS18, found in Streptococcus suis (strain 98HAH33).